The chain runs to 1487 residues: MIERGKYQSLTMVNWNGFFARTFDIDGLVTTLSGGNGAGKSTTMAAFITALIPDQSLLHFRNTTEAGSSQASRDKGLYGKLQPGACYAALDVVNSRNQRLLFAVKLQQVAGRDKKVDIKPFVIQGLPSHVKPTDVLIESVSATQARVRQINEVKESVAQYEGVQFKSFSSIVDYHAQMFEFGVIPKKLRNSSDRSKFYRLIEASLYGGISSAITRSLRDYLLPQNGGVKKAFQDMESALRENRMTLEAIKTTQADRDLFKHLITESTNYVAADYMRHANERHKKLEQSLSLRSELFSSRETLIEQNRLLNQVQQELEMLVESESALEQDYQGASDHLQLVQNALRQQEKIERYQEDLEELNERLEEQSMVVEEAQERVLMAEEQSTVAENEVDSLKTQLADYQQALDVQQTRALQYQQAVQALEKAKVLLSDSTLTAESAQALVAQLTQSEAEQTQALLALKHKLDMSSAAAQQFENALKLVHSIAGQVERAEASRHAKAAIQQARSAQQVVQNENQWRAQHRDLERSLNQQNQAQALVAEYQKAHQVTLDDEVMFEQERERHHAQLDSLEIALEENRELRSEQRRQEQDLQSDITQLQAIAPKWIAANDALEKLREQSGAELADSQSVMSQMQQVLEQEKQLSQAKDKLAERRSQLESEIERLASPGGSNDPRLKGLADTLGGVLLSEIYDDITIDDAPYFSAMYGPARHAIVVSDLSGIEEKLVELDDCPEDLYIIEGDVDAFDDSSIKAEELEGAVCVRLNDRQMRYSRFPVIPLFGRAAREQRLELLRSEREEVVEKHAKAAFDAQKMQRLFQAFNQFVAEHIQVAFAADPEQALVIARDKRNQLTRTLAELEAKELQMRSQIQNSKQALTMLDKLAPMMAVISDDTIGERFAELEEKIAQLADAKQFLGAHAKAVEQLESQLAVLDADPEQFDALEAQYQSADSQLQALKKQIFALSDLVERRHYFAYADSVDLLSKSSELSEQLKAKLVEAERARSRYRDELKQQQEQMNQYNQVLASLKSSYQAKLETVQEFKQELAEFGVSADEGALERAIRRRDELHERLHTSRSRKSEYERTLTSTELGMKELAKRLKKVQKEYVELRTFVVAAKAGWCSVLRLARENDVERRLHKRELAYLSAGELRSMSDKSLGALRLAVANNDDLRDALRLSEDNARPERKVLFYIAVYQHLRERIRQDIIHTDDPVEAIEEMEVELARLTEELTMRENRLAISSESVASIIKKTIQREQNRIRMLNQGLSNISFGQVKGVRLNVKVRESHEVLLNGLATQQEQHKDLFETARYTFSEAMAKLFQRVNPHIDMGQRSPQVLGEELLDYRNYLELSIEVNRGSDGWLQAESGALSTGEAIGTGQSILLMVVQSWEEESRRLRSKDIVPCRLLFLDEAARLDAKSISTLFELCDRLDMQLLIAAPENISPEKGTTYKLVRKVFKDHEHVHVVGLRGFGQEQKPKSEAQQMIEEFEA.

Position 34 to 41 (34 to 41 (GGNGAGKS)) interacts with ATP. Coiled-coil stretches lie at residues 297–426 (SSRE…LEKA), 460–666 (ALKH…RLAS), 781–806 (RAAR…AKAA), 836–1111 (EQAL…RTFV), and 1210–1266 (VEAI…LSNI). The interval 667-784 (PGGSNDPRLK…VIPLFGRAAR (118 aa)) is flexible hinge.

Belongs to the SMC family. MukB subfamily. Homodimerization via its hinge domain. Binds to DNA via its C-terminal region. Interacts, and probably forms a ternary complex, with MukE and MukF via its C-terminal region. The complex formation is stimulated by calcium or magnesium. Interacts with tubulin-related protein FtsZ.

The protein resides in the cytoplasm. The protein localises to the nucleoid. Its function is as follows. Plays a central role in chromosome condensation, segregation and cell cycle progression. Functions as a homodimer, which is essential for chromosome partition. Involved in negative DNA supercoiling in vivo, and by this means organize and compact chromosomes. May achieve or facilitate chromosome segregation by condensation DNA from both sides of a centrally located replisome during cell division. This Vibrio vulnificus (strain CMCP6) protein is Chromosome partition protein MukB.